A 159-amino-acid chain; its full sequence is Ribosomal RNA large subunit methyltransferase H (159 aa).

Residues L76, G108, and 127 to 132 contribute to the S-adenosyl-L-methionine site; that span reads FSKMTF.

It belongs to the RNA methyltransferase RlmH family. As to quaternary structure, homodimer.

It localises to the cytoplasm. It carries out the reaction pseudouridine(1915) in 23S rRNA + S-adenosyl-L-methionine = N(3)-methylpseudouridine(1915) in 23S rRNA + S-adenosyl-L-homocysteine + H(+). In terms of biological role, specifically methylates the pseudouridine at position 1915 (m3Psi1915) in 23S rRNA. This chain is Ribosomal RNA large subunit methyltransferase H, found in Bacillus velezensis (strain DSM 23117 / BGSC 10A6 / LMG 26770 / FZB42) (Bacillus amyloliquefaciens subsp. plantarum).